We begin with the raw amino-acid sequence, 299 residues long: Probable inactive heme oxygenase 2, chloroplastic (299 aa).

The segment covering 1-15 has biased composition (low complexity); the sequence is MASLLRPTPLLSTPR. Disordered stretches follow at residues 1-20, 45-70, and 96-126; these read MASL…LTHS, LCRS…KQYP, and DLSE…EETW. The N-terminal 83 residues, 1–83, are a transit peptide targeting the chloroplast; that stretch reads MASLLRPTPL…IGITEEMRFV (83 aa). The segment covering 46–57 has biased composition (polar residues); sequence CRSTPTPSQQKA. The segment covering 58 to 67 has biased composition (basic residues); sequence SQRKRTRYRK. Residues 105-122 are compositionally biased toward acidic residues; sequence EKEEEEEEEDDDDDDEVK.

The protein belongs to the heme oxygenase family. In terms of tissue distribution, widely expressed at low levels.

It is found in the plastid. The protein localises to the chloroplast. Probable inactive heme oxygenase. Binds protoporphyrin IX, a precursor for both heme and chlorophyll biosynthesis. Plays a minor role in phytochrome assembly and photomorphogenesis. The chain is Probable inactive heme oxygenase 2, chloroplastic (HO2) from Arabidopsis thaliana (Mouse-ear cress).